Consider the following 208-residue polypeptide: Thioredoxin domain-containing protein 9 (208 aa).

Residues 68–179 form the Thioredoxin domain; the sequence is YEEVADEKEF…MENRLARSEV (112 aa).

Expressed throughout the body with high expression in the nervous system, including the ventral nerve cord and tail neurons, and vulva.

It is found in the nucleus. It localises to the cytoplasm. Functionally, required for normal microtubule organization and function. Regulates tubulin acetylation in ALM and PLM neurons. This chain is Thioredoxin domain-containing protein 9, found in Caenorhabditis elegans.